The following is a 325-amino-acid chain: D-xylose 1-dehydrogenase (NADP(+)) 2 (325 aa).

The N-terminal stretch at 1-22 is a signal peptide; the sequence is MMFGILGTAGIGVKSVIPAVQA.

Belongs to the Gfo/Idh/MocA family. As to quaternary structure, homotetramer.

Its subcellular location is the secreted. It catalyses the reaction D-xylose + NADP(+) = D-xylono-1,5-lactone + NADPH + H(+). Functionally, NADP-dependent D-xylose dehydrogenase involved in the degradation of D-xylose, a major component of hemicelluloses such as xylan. Even if it shows D-xylose dehydrogenase activity, it is not essential for D-xylose degradation. In Haloferax volcanii (strain ATCC 29605 / DSM 3757 / JCM 8879 / NBRC 14742 / NCIMB 2012 / VKM B-1768 / DS2) (Halobacterium volcanii), this protein is D-xylose 1-dehydrogenase (NADP(+)) 2.